Reading from the N-terminus, the 332-residue chain is Malate dehydrogenase (332 aa).

NAD(+) is bound by residues 16-17 (QI), D43, and G90. R99 serves as a coordination point for oxaloacetate. Q113 and N132 together coordinate NAD(+). 4 residues coordinate oxaloacetate: N132, R163, H188, and S243. Residue H188 is the Proton acceptor of the active site.

Belongs to the LDH/MDH superfamily. MDH type 2 family. In terms of assembly, homodimer.

It is found in the cytoplasm. The catalysed reaction is (S)-malate + NAD(+) = oxaloacetate + NADH + H(+). Catalyzes the reduction of the carbonyl group of oxalacetic acid. No activity with pulegone. The chain is Malate dehydrogenase (MD1) from Nicotiana tabacum (Common tobacco).